The primary structure comprises 162 residues: CD-NTase-associated protein 7 (162 aa).

Residues His-138–Asn-162 form a disordered region. Over residues Ser-139–Tyr-154 the composition is skewed to polar residues.

The protein belongs to the HORMA family. HORMA1 subfamily. In terms of assembly, forms complexes with CdnC with 1:1 and 2:2 stoichimetry, and a 1:1:6 CdnC:Cap7:Cap6 complex.

Its function is as follows. Sensor protein of a CBASS antivirus system. CBASS (cyclic oligonucleotide-based antiphage signaling system) provides immunity against bacteriophage. The CD-NTase protein synthesizes cyclic nucleotides in response to infection; these serve as specific second messenger signals. The signals activate a diverse range of effectors, leading to bacterial cell death and thus abortive phage infection. A type III CBASS system. Expression of this CBASS system (Cap18-Cap6-Cap7-CdnC-CapW-Cap17) in a susceptible E.coli (strain MG1655) confers resistance to bacteriophage P1. The sensor protein for this CBASS system. Binds to a closure peptide, which allows it to activate CdnC for second messenger synthesis. This chain is CD-NTase-associated protein 7, found in Escherichia coli (strain KTE188).